The chain runs to 185 residues: Ribosome-recycling factor (185 aa).

Belongs to the RRF family.

It is found in the cytoplasm. In terms of biological role, responsible for the release of ribosomes from messenger RNA at the termination of protein biosynthesis. May increase the efficiency of translation by recycling ribosomes from one round of translation to another. In Pseudomonas savastanoi pv. phaseolicola (strain 1448A / Race 6) (Pseudomonas syringae pv. phaseolicola (strain 1448A / Race 6)), this protein is Ribosome-recycling factor.